Reading from the N-terminus, the 445-residue chain is Phosphoglucosamine mutase (445 aa).

The active-site Phosphoserine intermediate is Ser102. Mg(2+) is bound by residues Ser102, Asp241, Asp243, and Asp245. Ser102 carries the phosphoserine modification.

The protein belongs to the phosphohexose mutase family. The cofactor is Mg(2+). Activated by phosphorylation.

It catalyses the reaction alpha-D-glucosamine 1-phosphate = D-glucosamine 6-phosphate. Functionally, catalyzes the conversion of glucosamine-6-phosphate to glucosamine-1-phosphate. The sequence is that of Phosphoglucosamine mutase from Pectobacterium atrosepticum (strain SCRI 1043 / ATCC BAA-672) (Erwinia carotovora subsp. atroseptica).